The following is a 494-amino-acid chain: Probable cytosol aminopeptidase (494 aa).

Mn(2+)-binding residues include K260 and D265. The active site involves K272. D283, D342, and E344 together coordinate Mn(2+). The active site involves R346.

The protein belongs to the peptidase M17 family. Requires Mn(2+) as cofactor.

It localises to the cytoplasm. The catalysed reaction is Release of an N-terminal amino acid, Xaa-|-Yaa-, in which Xaa is preferably Leu, but may be other amino acids including Pro although not Arg or Lys, and Yaa may be Pro. Amino acid amides and methyl esters are also readily hydrolyzed, but rates on arylamides are exceedingly low.. It carries out the reaction Release of an N-terminal amino acid, preferentially leucine, but not glutamic or aspartic acids.. Functionally, presumably involved in the processing and regular turnover of intracellular proteins. Catalyzes the removal of unsubstituted N-terminal amino acids from various peptides. The chain is Probable cytosol aminopeptidase from Bacillus cereus (strain ATCC 10987 / NRS 248).